The following is a 251-amino-acid chain: Triosephosphate isomerase (251 aa).

Substrate is bound at residue 9–11 (NWK). H95 serves as the catalytic Electrophile. The active-site Proton acceptor is the E167. Substrate-binding positions include G173, S213, and 234–235 (GG). At S213 the chain carries Phosphoserine.

This sequence belongs to the triosephosphate isomerase family. Homodimer.

Its subcellular location is the cytoplasm. It carries out the reaction D-glyceraldehyde 3-phosphate = dihydroxyacetone phosphate. It functions in the pathway carbohydrate biosynthesis; gluconeogenesis. Its pathway is carbohydrate degradation; glycolysis; D-glyceraldehyde 3-phosphate from glycerone phosphate: step 1/1. In terms of biological role, involved in the gluconeogenesis. Catalyzes stereospecifically the conversion of dihydroxyacetone phosphate (DHAP) to D-glyceraldehyde-3-phosphate (G3P). This chain is Triosephosphate isomerase, found in Bacillus anthracis.